A 962-amino-acid chain; its full sequence is Voltage-gated delayed rectifier potassium channel KCNH1 (962 aa).

Over 1-220 the chain is Cytoplasmic; it reads MTMAGGRRGL…LHYCVFKTTW (220 aa). Residues 14 to 94 enclose the PAS domain; sequence QNTFLENIVR…QTFENYEMNS (81 aa). One can recognise a PAC domain in the interval 93–145; it reads NSFEILMYKKNRTPVWFFVKIAPIRNEQDKVVLFLCTFSDITAFKQPIEDDSC. A required for phosphatidylinositol bisphosphate binding region spans residues 151 to 162; that stretch reads FARLTRALTSSR. Residues 221 to 241 traverse the membrane as a helical segment; sequence DWIILILTFYTAILVPYNVSF. Topologically, residues 242–248 are extracellular; it reads KTRQNNV. The chain crosses the membrane as a helical span at residues 249–269; that stretch reads AWLVVDSIVDVIFLVDIVLNF. Residues 270–290 are Cytoplasmic-facing; that stretch reads HTTFVGPAGEVISDPKLIRMN. Residues 291–309 traverse the membrane as a helical segment; that stretch reads YLKTWFVIDLLSCLPYDVI. Over 310–318 the chain is Extracellular; the sequence is NAFENVDEG. The helical; Voltage-sensor transmembrane segment at 319–341 threads the bilayer; sequence ISSLFSSLKVVRLLRLGRVARKL. Residues 342-350 are Cytoplasmic-facing; the sequence is DHYIEYGAA. The helical transmembrane segment at 351–372 threads the bilayer; that stretch reads VLVLLVCVFGLAAHWMACIWYS. Residues 373–421 are Extracellular-facing; sequence IGDYEIFDEDTKTIRNNSWLYQLALDIGTPYQFNGSGSGKWEGGPSKNS. Residues Asn388 and Asn406 are each glycosylated (N-linked (GlcNAc...) asparagine). The pore-forming intramembrane region spans 422–443; it reads VYISSLYFTMTSLTSVGFGNIA. The Selectivity filter motif lies at 436–441; that stretch reads SVGFGN. Over 444-450 the chain is Extracellular; the sequence is PSTDIEK. Residues 451–471 traverse the membrane as a helical segment; sequence IFAVAIMMIGSLLYATIFGNV. Residues 472–962 lie on the Cytoplasmic side of the membrane; the sequence is TTIFQQMYAN…ESDRDIFGAS (491 aa). Positions 646–743 are calmodulin-binding; the sequence is KRDALQKVLE…LDDLDVEKGN (98 aa). An interaction with cyclic nucleotide-binding pocket region spans residues 672 to 674; it reads YNL. Residues 830–852 show a composition bias toward basic and acidic residues; the sequence is ESMETLPERTKASGEATLKKTDS. Disordered regions lie at residues 830 to 859 and 933 to 962; these read ESME…GITK and SRGS…FGAS. Residues 897–937 form a CAD (involved in subunit assembly) region; sequence ATVLEVKHELKEDIKALNAKMTSIEKQLSEILRILMSRGSS. The span at 934–952 shows a compositional bias: polar residues; sequence RGSSQSPQDTCEVSRPQSP. Phosphoserine occurs at positions 947, 951, and 954. A compositionally biased stretch (basic and acidic residues) spans 953–962; that stretch reads ESDRDIFGAS.

This sequence belongs to the potassium channel family. H (Eag) (TC 1.A.1.20) subfamily. Kv10.1/KCNH1 sub-subfamily. Homomultimer. The potassium channel is composed of a homo- or heterotetrameric complex of pore-forming alpha subunits that can associate with modulating beta subunits. Heteromultimer with KCNH5/EAG2. Interacts with ALG10B. Interacts with RABEP1. Interacts (via C-terminus) with CTTN. Interacts (via cytoplasmic region) with Ca(2+)-bound calmodulin. Post-translationally, channel activity is regulated via tyrosine phosphorylation/dephosphorylation by SRC and PTPN6. As to expression, detected in cerebellum, at parallel fiber synapses on Purkinje cell spines. Detected in hippocampus neurons (at protein level). Detected in brain, but not in the other tissues tested; expression is highest in granular cells of the dentate gyrus, in hippocampus CA3 pyramidal cells, and in cerebellar granule cells. Detected in pituitary.

It is found in the cell membrane. The protein resides in the nucleus inner membrane. It localises to the cell projection. The protein localises to the dendrite. Its subcellular location is the axon. It is found in the presynaptic cell membrane. The protein resides in the perikaryon. It localises to the postsynaptic density membrane. The protein localises to the early endosome membrane. The enzyme catalyses K(+)(in) = K(+)(out). With respect to regulation, channel activity is inhibited by interaction with Ca(2+)-bound calmodulin. Interaction of a single pore-forming alpha subunit with a calmodulin chain is sufficient to promote channel closure. Channel activity is not regulated by cyclic nucleotides. Channel activity is inhibited by binding intracellular phosphatidylinositol-3,5-bisphosphate and phosphatidylinositol-4,5-bisphosphate (PIP2), but is not inhibited by phosphatidylinositol 4-phosphate. Pore-forming (alpha) subunit of a voltage-gated delayed rectifier potassium channel that mediates outward-rectifying potassium currents which, on depolarization, reaches a steady-state level and do not inactivate. The activation kinetics depend on the prepulse potential and external divalent cation concentration. With negative prepulses, the current activation is delayed and slowed down several fold, whereas more positive prepulses speed up activation. The time course of activation is biphasic with a fast and a slowly activating current component. Activates at more positive membrane potentials and exhibit a steeper activation curve. Channel properties are modulated by subunit assembly. Mediates IK(NI) current in myoblasts. Involved in the regulation of cell proliferation and differentiation, in particular adipogenic and osteogenic differentiation in bone marrow-derived mesenchymal stem cells (MSCs). This chain is Voltage-gated delayed rectifier potassium channel KCNH1, found in Rattus norvegicus (Rat).